The sequence spans 739 residues: MICOS complex subunit Mic60 (739 aa).

The tract at residues A23 to P63 is disordered. Residues E47–S61 are compositionally biased toward low complexity. The chain crosses the membrane as a helical span at residues A69–T89. The interval V154–L219 is disordered. Positions G163–P198 are enriched in basic and acidic residues. Low complexity predominate over residues V199–A212. A coiled-coil region spans residues T283–L339.

The protein belongs to the MICOS complex subunit Mic60 family. Component of the mitochondrial contact site and cristae organizing system (MICOS) complex. Interacts with the mitochondria-shaping protein Opa1.

Its subcellular location is the mitochondrion inner membrane. Its function is as follows. Component of the MICOS complex, a large protein complex of the mitochondrial inner membrane that plays crucial roles in the maintenance of crista junctions, inner membrane architecture, and formation of contact sites to the outer membrane. The polypeptide is MICOS complex subunit Mic60 (Drosophila melanogaster (Fruit fly)).